We begin with the raw amino-acid sequence, 885 residues long: Cadherin-1 (885 aa).

The signal sequence occupies residues 1–26 (MGPRYGGAPALLLPLLLLLQVSSGLC). A propeptide spanning residues 27 to 156 (QEPEPCRPGF…SQHGLRRQKR (130 aa)) is cleaved from the precursor. Residues 121-131 (KAATHHHHHHH) are compositionally biased toward basic residues. Residues 121–141 (KAATHHHHHHHDAPSKTQTEV) form a disordered region. Topologically, residues 157–712 (DWVIPPISCP…YAEAGLQVPA (556 aa)) are extracellular. Cadherin domains follow at residues 158–264 (WVIP…KPEF), 265–377 (TQAV…PPIF), 378–488 (NPTT…APIF), 489–597 (IPCP…GPIP), and 607–688 (KNPQ…VFVC). Aspartate 259 contributes to the Ca(2+) binding site. The O-linked (Man...) serine glycan is linked to serine 282. O-linked (Man...) threonine glycosylation occurs at threonine 287. Position 290 (aspartate 290) interacts with Ca(2+). 4 O-linked (Man...) threonine glycosylation sites follow: threonine 360, threonine 472, threonine 474, and threonine 511. N-linked (GlcNAc...) asparagine glycosylation occurs at asparagine 560. O-linked (Man...) threonine glycans are attached at residues threonine 578, threonine 580, and threonine 582. Asparagine 639 is a glycosylation site (N-linked (GlcNAc...) asparagine). A helical membrane pass occupies residues 713 to 733 (ILGILGGILALLILILLLLLF). The Cytoplasmic portion of the chain corresponds to 734–885 (VRRRRVVKEP…ADMYGGGEDD (152 aa)). The interval 750-770 (DTRDNVYYYDEEGGGEEDQDF) is disordered. Phosphotyrosine; by SRC occurs at positions 756, 757, and 758. Residues 758–770 (YDEEGGGEEDQDF) show a composition bias toward acidic residues. Residues 761-772 (EGGGEEDQDFDL) are required for binding CTNND1 and PSEN1. Residues serine 773, serine 796, serine 841, serine 843, and serine 849 each carry the phosphoserine modification. The tract at residues 792 to 811 (PTLLSVPQYRPRPANPDEIG) is disordered. Residues 814–885 (IDENLKAADT…ADMYGGGEDD (72 aa)) form a required for binding alpha, beta and gamma catenins region.

Homodimer; disulfide-linked. Component of an E-cadherin/ catenin adhesion complex composed of at least E-cadherin/CDH1, beta-catenin/CTNNB1 or gamma-catenin/JUP, and potentially alpha-catenin/CTNNA1; the complex is located to adherens junctions. Found in a complex composed of CDH1, RAP1A and PKP3; PKP3 acts as a scaffold protein within the complex, the complex is required for CDH1 localization to mature desmosome cell junctions. Interacts with the TRPV4 and CTNNB1 complex. Interacts with CTNND1. The stable association of CTNNA1 is controversial as CTNNA1 was shown not to bind to F-actin when assembled in the complex. Alternatively, the CTNNA1-containing complex may be linked to F-actin by other proteins such as LIMA1. Interaction with PSEN1, cleaves CDH1 resulting in the disassociation of cadherin-based adherens junctions (CAJs). Interacts with AJAP1 and DLGAP5. Interacts with TBC1D2. Interacts with LIMA1. Interacts with CAV1. Interacts with PIP5K1C. Interacts with RAB8B. Interacts with DDR1; this stabilizes CDH1 at the cell surface and inhibits its internalization. Interacts with RAPGEF2. Interacts with KLRG1. Forms a ternary complex composed of ADAM10, CADH1 and EPHA4; within the complex, CADH1 is cleaved by ADAM10 which disrupts adherens junctions. Interacts with SPEF1. Interacts with CTNNB1 and PKP2. Interacts with AMOTL2; the interaction may facilitate binding of radial actin fibers to cell junction complexes. Interacts with DSG3; the interaction is required for CDH1 localization to developing adherens junctions. During apoptosis or with calcium influx, cleaved by a membrane-bound metalloproteinase (ADAM10), PS1/gamma-secretase and caspase-3. Processing by the metalloproteinase, induced by calcium influx, causes disruption of cell-cell adhesion and the subsequent release of beta-catenin into the cytoplasm. The residual membrane-tethered cleavage product is rapidly degraded via an intracellular proteolytic pathway. Cleavage by caspase-3 releases the cytoplasmic tail resulting in disintegration of the actin microfilament system. The gamma-secretase-mediated cleavage promotes disassembly of adherens junctions. During development of the cochlear organ of Corti, cleavage by ADAM10 at adherens junctions promotes pillar cell separation. Post-translationally, N-glycosylation at Asn-639 is essential for expression, folding and trafficking. Addition of bisecting N-acetylglucosamine by MGAT3 modulates its cell membrane location. In terms of processing, ubiquitinated by a SCF complex containing SKP2, which requires prior phosphorylation by CK1/CSNK1A1. Ubiquitinated by CBLL1/HAKAI, requires prior phosphorylation at Tyr-757. O-glycosylated. O-manosylated by TMTC1, TMTC2, TMTC3 or TMTC4. Thr-287 and Thr-511 are O-mannosylated by TMTC2 or TMTC4 but not TMTC1 or TMTC3.

The protein resides in the cell junction. The protein localises to the adherens junction. Its subcellular location is the cell membrane. It localises to the endosome. It is found in the golgi apparatus. The protein resides in the trans-Golgi network. The protein localises to the cytoplasm. Its subcellular location is the desmosome. Functionally, cadherins are calcium-dependent cell adhesion proteins. They preferentially interact with themselves in a homophilic manner in connecting cells; cadherins may thus contribute to the sorting of heterogeneous cell types. CDH1 is involved in mechanisms regulating cell-cell adhesions, mobility and proliferation of epithelial cells. Promotes organization of radial actin fiber structure and cellular response to contractile forces, via its interaction with AMOTL2 which facilitates anchoring of radial actin fibers to CDH1 junction complexes at the cell membrane. Plays a role in the early stages of desmosome cell-cell junction formation via facilitating the recruitment of DSG2 and DSP to desmosome plaques. Has a potent invasive suppressor role. It is a ligand for integrin alpha-E/beta-7. Its function is as follows. E-Cad/CTF2 promotes non-amyloidogenic degradation of Abeta precursors. Has a strong inhibitory effect on APP C99 and C83 production. The protein is Cadherin-1 (CDH1) of Canis lupus familiaris (Dog).